A 297-amino-acid chain; its full sequence is Acetyl-coenzyme A carboxylase carboxyl transferase subunit beta (297 aa).

Residues 27–296 (LWHKCPACEA…PEQAREAAAV (270 aa)) form the CoA carboxyltransferase N-terminal domain. Zn(2+)-binding residues include Cys-31, Cys-34, Cys-50, and Cys-53. The C4-type zinc-finger motif lies at 31 to 53 (CPACEAVLYRPELEKTLDVCPKC).

It belongs to the AccD/PCCB family. Acetyl-CoA carboxylase is a heterohexamer composed of biotin carboxyl carrier protein (AccB), biotin carboxylase (AccC) and two subunits each of ACCase subunit alpha (AccA) and ACCase subunit beta (AccD). The cofactor is Zn(2+).

It is found in the cytoplasm. It carries out the reaction N(6)-carboxybiotinyl-L-lysyl-[protein] + acetyl-CoA = N(6)-biotinyl-L-lysyl-[protein] + malonyl-CoA. The protein operates within lipid metabolism; malonyl-CoA biosynthesis; malonyl-CoA from acetyl-CoA: step 1/1. Its function is as follows. Component of the acetyl coenzyme A carboxylase (ACC) complex. Biotin carboxylase (BC) catalyzes the carboxylation of biotin on its carrier protein (BCCP) and then the CO(2) group is transferred by the transcarboxylase to acetyl-CoA to form malonyl-CoA. The sequence is that of Acetyl-coenzyme A carboxylase carboxyl transferase subunit beta from Pseudomonas putida (strain W619).